Here is a 262-residue protein sequence, read N- to C-terminus: Aminoglycoside (3'') (9) adenylyltransferase (262 aa).

The catalysed reaction is streptomycin + ATP = 3''-O-adenylylstreptomycin + diphosphate. It carries out the reaction spectinomycin + ATP = 9-O-adenylylspectinomycin + diphosphate. Its function is as follows. Mediates bacterial resistance to the antibiotics streptomycin and spectinomycin. This Klebsiella pneumoniae protein is Aminoglycoside (3'') (9) adenylyltransferase.